The primary structure comprises 87 residues: Sec-independent protein translocase protein TatA (87 aa).

Residues 1–21 form a helical membrane-spanning segment; that stretch reads MGSFSITHWLILLVVVVVVFG. Residues 56 to 87 form a disordered region; it reads VLDHDAGTNPPNITGTQSDTTSANKVDDTHNV. The segment covering 64-79 has biased composition (polar residues); the sequence is NPPNITGTQSDTTSAN.

The protein belongs to the TatA/E family. The Tat system comprises two distinct complexes: a TatABC complex, containing multiple copies of TatA, TatB and TatC subunits, and a separate TatA complex, containing only TatA subunits. Substrates initially bind to the TatABC complex, which probably triggers association of the separate TatA complex to form the active translocon.

It is found in the cell inner membrane. Functionally, part of the twin-arginine translocation (Tat) system that transports large folded proteins containing a characteristic twin-arginine motif in their signal peptide across membranes. TatA could form the protein-conducting channel of the Tat system. This chain is Sec-independent protein translocase protein TatA, found in Psychrobacter arcticus (strain DSM 17307 / VKM B-2377 / 273-4).